A 639-amino-acid chain; its full sequence is MSGAFNNDGRGISPLIATSWERCNKLMKRETWNVPHQAQGVTFASIYRRKKAMLTLGQAALEDAWEYMAPRECALFILDETACILSRNGDPQTLQQLSALGFNDGTYCAEGIIGTCALSLAAISGQAVKTMADQHFKQVLWNWAFCATPLFDSKGRLTGTIALACPVEQTTAADLPLTLAIAREVGNLLLTDSLLAETNRHLNQLNALLESMDDGVISWDEQGNLQFINAQAARVLRLDATASQGRAITELLTLPAVLQQAIKQAHPLKHVEATFESQHQFIDAVITLKPIIETQGTSFILLLHPVEQMRQLMTSQLGKVSHTFAHMPQDDPQTRRLIHFGRQAARSSFPVLLCGEEGVGKALLSQAIHNESERAAGPYIAVNCELYGDAALAEEFIGGDRTDNENGRLSRLELAHGGTLFLEKIEYLAVELQSALLQVIKQGVITRLDARRLIPIDVKVIATTTADLAMLVEQNRFSRQLYYALHAFEITIPPLRMRRGSIPALVNNKLRSLEKRFSTRLKIDDDALARLVSCAWPGNDFELYSVIENLALSSDNGRIRVSDLPEHLFTEQATDDVSATRLSTSLSFAEVEKEAIINAAQVTGGRIQEMSALLGIGRTTLWRKMKQHGIDAGQFKRRV.

The tract at residues 1-318 (MSGAFNNDGR…MRQLMTSQLG (318 aa)) is sensor domain. The region spanning 52-189 (AMLTLGQAAL…AIAREVGNLL (138 aa)) is the GAF domain. In terms of domain architecture, PAS spans 203–265 (NQLNALLESM…AVLQQAIKQA (63 aa)). The region spanning 327-552 (MPQDDPQTRR…LYSVIENLAL (226 aa)) is the Sigma-54 factor interaction domain. ATP is bound by residues 355-362 (GEEGVGKA) and 415-424 (AHGGTLFLEK).

In terms of assembly, homodimer. DhaR forms complexes with DhaK and DhaL-ADP.

In terms of biological role, positively regulates the dhaKLM operon from a sigma-70 promoter. Represses its own expression. The sequence is that of PTS-dependent dihydroxyacetone kinase operon regulatory protein from Escherichia coli (strain K12).